The following is a 491-amino-acid chain: Glutamyl-tRNA(Gln) amidotransferase subunit A (491 aa).

Residues lysine 80 and serine 155 each act as charge relay system in the active site. Serine 179 serves as the catalytic Acyl-ester intermediate.

This sequence belongs to the amidase family. GatA subfamily. As to quaternary structure, heterotrimer of A, B and C subunits.

It catalyses the reaction L-glutamyl-tRNA(Gln) + L-glutamine + ATP + H2O = L-glutaminyl-tRNA(Gln) + L-glutamate + ADP + phosphate + H(+). Functionally, allows the formation of correctly charged Gln-tRNA(Gln) through the transamidation of misacylated Glu-tRNA(Gln) in organisms which lack glutaminyl-tRNA synthetase. The reaction takes place in the presence of glutamine and ATP through an activated gamma-phospho-Glu-tRNA(Gln). The protein is Glutamyl-tRNA(Gln) amidotransferase subunit A of Salinispora tropica (strain ATCC BAA-916 / DSM 44818 / JCM 13857 / NBRC 105044 / CNB-440).